A 432-amino-acid chain; its full sequence is Protein distal antenna-related (432 aa).

An HTH psq-type domain is found at 15–66; it reads TRGKRPLRNLTPNDKVRAIQRIHNGETKASVSRDLGVPESTLRGWCKNEQKL. Positions 42–62 form a DNA-binding region, H-T-H motif; the sequence is KASVSRDLGVPESTLRGWCKN. Disordered stretches follow at residues 195-221 and 401-432; these read ESAD…NSTK and SCAS…DGEQ. Polar residues-rich tracts occupy residues 202-211 and 401-425; these read KSPQSTTDIT and SCAS…TSIA.

In terms of assembly, interacts with itself, dan, ey and dac to form a complex (or complexes) containing the RD factors.

The protein resides in the nucleus. In terms of biological role, probable transcription factor with a role in the retinal determination (RD) network. Regulates ato expression and is required for normal R8 induction and differentiation. Danr appears to repress Dan expression, but Dan is required for Danr expression anterior to the morphogenetic furrow (MF). Dan and Danr lie downstream of so and require dac function for highest levels of expression. Contributes to differentiation of antenna-specific characteristics; effector gene that acts downstream of homothorax (hth), Distal-less (Dll), cut (ct) and spineless (ss) genes to control differentiation of distal antennal structures. The protein is Protein distal antenna-related of Drosophila pseudoobscura pseudoobscura (Fruit fly).